The sequence spans 110 residues: Integration host factor subunit alpha (110 aa).

Belongs to the bacterial histone-like protein family. In terms of assembly, heterodimer of an alpha and a beta chain.

Functionally, this protein is one of the two subunits of integration host factor, a specific DNA-binding protein that functions in genetic recombination as well as in transcriptional and translational control. The sequence is that of Integration host factor subunit alpha from Bdellovibrio bacteriovorus (strain ATCC 15356 / DSM 50701 / NCIMB 9529 / HD100).